Reading from the N-terminus, the 368-residue chain is D-amino-acid oxidase (368 aa).

FAD is bound by residues Ala11, Ser14, Lys35, His36, Cys46, Ser47, Gly51, Asn53, and Phe174. Cysteines 230 and 285 form a disulfide. Tyr244, Tyr260, and Arg308 together coordinate (R)-lactate. Anthranilate contacts are provided by Tyr244, Tyr260, and Arg308. Positions 308, 334, 337, 338, and 339 each coordinate FAD. The Microbody targeting signal signature appears at 366-368 (ARL).

This sequence belongs to the DAMOX/DASOX family. Homotetramer. Requires FAD as cofactor. Post-translationally, the disulfide bond might contribute to the high thermal stability of the protein.

The protein resides in the peroxisome matrix. The enzyme catalyses a D-alpha-amino acid + O2 + H2O = a 2-oxocarboxylate + H2O2 + NH4(+). It catalyses the reaction D-alanine + O2 + H2O = pyruvate + H2O2 + NH4(+). It carries out the reaction D-glutamate + O2 + H2O = H2O2 + 2-oxoglutarate + NH4(+). The catalysed reaction is D-serine + O2 + H2O = 3-hydroxypyruvate + H2O2 + NH4(+). The enzyme catalyses D-phenylalanine + O2 + H2O = 3-phenylpyruvate + H2O2 + NH4(+). It catalyses the reaction D-arginine + O2 + H2O = 5-guanidino-2-oxopentanoate + H2O2 + NH4(+). It carries out the reaction D-methionine + O2 + H2O = 4-methylsulfanyl-2-oxobutanoate + H2O2 + NH4(+). The catalysed reaction is D-leucine + O2 + H2O = 4-methyl-2-oxopentanoate + H2O2 + NH4(+). The enzyme catalyses D-lysine + O2 + H2O = 6-amino-2-oxohexanoate + H2O2 + NH4(+). It catalyses the reaction D-valine + O2 + H2O = 3-methyl-2-oxobutanoate + H2O2 + NH4(+). It carries out the reaction D-histidine + O2 + H2O = 3-(imidazol-5-yl)pyruvate + H2O2 + NH4(+). The catalysed reaction is D-glutamine + O2 + H2O = 2-oxoglutaramate + H2O2 + NH4(+). The enzyme catalyses D-isoleucine + O2 + H2O = (R)-3-methyl-2-oxopentanoate + H2O2 + NH4(+). It catalyses the reaction D-allo-isoleucine + O2 + H2O = (S)-3-methyl-2-oxopentanoate + H2O2 + NH4(+). It carries out the reaction D-threonine + O2 + H2O = (S)-3-hydroxy-2-oxobutanoate + H2O2 + NH4(+). The catalysed reaction is D-asparagine + O2 + H2O = 2-oxosuccinamate + H2O2 + NH4(+). The enzyme catalyses D-tryptophan + O2 + H2O = indole-3-pyruvate + H2O2 + NH4(+). It catalyses the reaction D-tyrosine + O2 + H2O = 3-(4-hydroxyphenyl)pyruvate + H2O2 + NH4(+). Partially inhibited by benzoate, crotonate, and D-malate. In terms of biological role, catalyzes the oxidative deamination of D-amino acids with broad substrate specificity. Enables the organism to utilize D-amino acids as a source of nutrients. Unusually, has high activity on D-glutamate. In Talaromyces emersonii (Thermophilic fungus), this protein is D-amino-acid oxidase.